Consider the following 720-residue polypeptide: Probable GTPase-activating protein GYL1 (720 aa).

Position 1 is an N-acetylmethionine (methionine 1). The segment covering 1–52 has biased composition (basic and acidic residues); that stretch reads MNSNEDIHEERIEVPRTPHQTQPEKDSDRIALRDEISVPEGDEKAYSDEKVE. Residues 1-132 form a disordered region; that stretch reads MNSNEDIHEE…TSPPLPPRAD (132 aa). Threonine 17 carries the phosphothreonine modification. Serine 37 is modified (phosphoserine). The segment covering 54–66 has biased composition (polar residues); that stretch reads ATTNASSNFGSNE. At serine 73 the chain carries Phosphoserine. A compositionally biased stretch (polar residues) spans 95–108; that stretch reads SKTILPSDDLSQQL. The segment covering 111 to 120 has biased composition (basic and acidic residues); it reads EESKVEEALK. Serine 139 is modified (phosphoserine). Disordered stretches follow at residues 144–164 and 179–210; these read SLPP…RPQL and APHG…PRRI. Residues 184-196 are compositionally biased toward polar residues; sequence ATPSKSPTSAVGN. A Rab-GAP TBC domain is found at 297–477; the sequence is GIPAAYRLVV…RIGDMVFLEG (181 aa). Lysine 498 participates in a covalent cross-link: Glycyl lysine isopeptide (Lys-Gly) (interchain with G-Cter in SUMO). The stretch at 572 to 696 forms a coiled coil; the sequence is QYKSITEKNL…EIKTANKNGT (125 aa).

Belongs to the GYP5 family. As to quaternary structure, interacts with GYP5 and RVS167. Is part of SEC4-containing complexes.

It localises to the cytoplasm. The protein resides in the bud. It is found in the bud neck. Probable GTPase-activating protein which stimulates the GTP hydrolysis rate by GYP5 of YPT1 and SEC4. Involved in ER to Golgi trafficking and polarized exocytosis. The polypeptide is Probable GTPase-activating protein GYL1 (GYL1) (Saccharomyces cerevisiae (strain ATCC 204508 / S288c) (Baker's yeast)).